The following is a 485-amino-acid chain: Phosphoglucosamine mutase (485 aa).

Ser133 functions as the Phosphoserine intermediate in the catalytic mechanism. Mg(2+)-binding residues include Ser133, Asp274, Asp276, and Asp278. A Phosphoserine modification is found at Ser133.

The protein belongs to the phosphohexose mutase family. Mg(2+) is required as a cofactor. In terms of processing, activated by phosphorylation.

It catalyses the reaction alpha-D-glucosamine 1-phosphate = D-glucosamine 6-phosphate. Catalyzes the conversion of glucosamine-6-phosphate to glucosamine-1-phosphate. This chain is Phosphoglucosamine mutase, found in Rippkaea orientalis (strain PCC 8801 / RF-1) (Cyanothece sp. (strain PCC 8801)).